A 140-amino-acid polypeptide reads, in one-letter code: 3-hydroxyacyl-[acyl-carrier-protein] dehydratase FabZ (140 aa).

The active site involves His-48.

This sequence belongs to the thioester dehydratase family. FabZ subfamily.

Its subcellular location is the cytoplasm. It carries out the reaction a (3R)-hydroxyacyl-[ACP] = a (2E)-enoyl-[ACP] + H2O. In terms of biological role, involved in unsaturated fatty acids biosynthesis. Catalyzes the dehydration of short chain beta-hydroxyacyl-ACPs and long chain saturated and unsaturated beta-hydroxyacyl-ACPs. The sequence is that of 3-hydroxyacyl-[acyl-carrier-protein] dehydratase FabZ from Caldicellulosiruptor bescii (strain ATCC BAA-1888 / DSM 6725 / KCTC 15123 / Z-1320) (Anaerocellum thermophilum).